A 477-amino-acid chain; its full sequence is Glycogen synthase (477 aa).

Lys-15 provides a ligand contact to ADP-alpha-D-glucose.

Belongs to the glycosyltransferase 1 family. Bacterial/plant glycogen synthase subfamily.

The enzyme catalyses [(1-&gt;4)-alpha-D-glucosyl](n) + ADP-alpha-D-glucose = [(1-&gt;4)-alpha-D-glucosyl](n+1) + ADP + H(+). The protein operates within glycan biosynthesis; glycogen biosynthesis. Its function is as follows. Synthesizes alpha-1,4-glucan chains using ADP-glucose. The chain is Glycogen synthase from Shigella sonnei (strain Ss046).